The following is a 225-amino-acid chain: NAD(P)H-quinone oxidoreductase subunit K, chloroplastic (225 aa).

[4Fe-4S] cluster is bound by residues Cys-43, Cys-44, Cys-108, and Cys-139.

It belongs to the complex I 20 kDa subunit family. NDH is composed of at least 16 different subunits, 5 of which are encoded in the nucleus. Requires [4Fe-4S] cluster as cofactor.

It is found in the plastid. The protein resides in the chloroplast thylakoid membrane. It catalyses the reaction a plastoquinone + NADH + (n+1) H(+)(in) = a plastoquinol + NAD(+) + n H(+)(out). The enzyme catalyses a plastoquinone + NADPH + (n+1) H(+)(in) = a plastoquinol + NADP(+) + n H(+)(out). In terms of biological role, NDH shuttles electrons from NAD(P)H:plastoquinone, via FMN and iron-sulfur (Fe-S) centers, to quinones in the photosynthetic chain and possibly in a chloroplast respiratory chain. The immediate electron acceptor for the enzyme in this species is believed to be plastoquinone. Couples the redox reaction to proton translocation, and thus conserves the redox energy in a proton gradient. In Agrostis stolonifera (Creeping bentgrass), this protein is NAD(P)H-quinone oxidoreductase subunit K, chloroplastic.